The sequence spans 512 residues: Histidine ammonia-lyase (512 aa).

Residues 143-145 constitute a cross-link (5-imidazolinone (Ala-Gly)); sequence ASG. Ser144 carries the 2,3-didehydroalanine (Ser) modification.

This sequence belongs to the PAL/histidase family. Contains an active site 4-methylidene-imidazol-5-one (MIO), which is formed autocatalytically by cyclization and dehydration of residues Ala-Ser-Gly.

It is found in the cytoplasm. The catalysed reaction is L-histidine = trans-urocanate + NH4(+). The protein operates within amino-acid degradation; L-histidine degradation into L-glutamate; N-formimidoyl-L-glutamate from L-histidine: step 1/3. The sequence is that of Histidine ammonia-lyase from Ruegeria pomeroyi (strain ATCC 700808 / DSM 15171 / DSS-3) (Silicibacter pomeroyi).